The following is a 151-amino-acid chain: AVTPMSADQLALFKSSWNTVKHNEVDILYAVFKANPDIQAKFPQFAGKDLDSIKDSADFAVHSGRIVGFFSEVIGLIGNPENRPALKTLIDGLASSHKARGIEKAQFEEFRASLVDYLSHHLDWNDTMKSTWDLALNNMFFYILHALEVAQ.

The region spanning 4 to 148 (PMSADQLALF…MFFYILHALE (145 aa)) is the Globin domain. H62 and H97 together coordinate heme b.

It belongs to the globin family. In terms of assembly, homodimer.

The polypeptide is Globin CTT-VIII (CTT-8) (Chironomus thummi thummi (Midge)).